Here is a 217-residue protein sequence, read N- to C-terminus: DNA transformation protein TfoX (217 aa).

It belongs to the Sxy/TfoX family.

In terms of biological role, required for DNA transformation. Positively regulates genes required for DNA transformation (late competence-specific genes) in association with CRP. Required for expression of the late competence-specific gene, com101A. Required for expression of the dprABC operon. The polypeptide is DNA transformation protein TfoX (Haemophilus influenzae (strain ATCC 51907 / DSM 11121 / KW20 / Rd)).